A 445-amino-acid chain; its full sequence is Probable phosphoglucosamine mutase (445 aa).

Residue S99 is the Phosphoserine intermediate of the active site. Mg(2+) is bound by residues S99, D238, D240, and D242. S99 is subject to Phosphoserine.

The protein belongs to the phosphohexose mutase family. Mg(2+) is required as a cofactor. In terms of processing, activated by phosphorylation.

It catalyses the reaction alpha-D-glucosamine 1-phosphate = D-glucosamine 6-phosphate. Functionally, catalyzes the conversion of glucosamine-6-phosphate to glucosamine-1-phosphate. The sequence is that of Probable phosphoglucosamine mutase from Methanobrevibacter smithii (strain ATCC 35061 / DSM 861 / OCM 144 / PS).